We begin with the raw amino-acid sequence, 284 residues long: Tropomyosin (284 aa).

A coiled-coil region spans residues 1-284; the sequence is MDAIKKKMQA…DQTFQELFGY (284 aa). Residues 113 to 142 show a composition bias toward basic and acidic residues; it reads LEKATHTADESDRVRKVMENRSFQDEERAN. The tract at residues 113-143 is disordered; sequence LEKATHTADESDRVRKVMENRSFQDEERANT.

This sequence belongs to the tropomyosin family.

Tropomyosin, in association with the troponin complex, plays a central role in the calcium dependent regulation of muscle contraction. The sequence is that of Tropomyosin from Acanthocheilonema viteae (Filarial nematode worm).